Reading from the N-terminus, the 518-residue chain is Equilibrative nucleoside transporter 4 (518 aa).

Basic and acidic residues predominate over residues 1-10; sequence MGSKGAERRK. A disordered region spans residues 1-21; the sequence is MGSKGAERRKQATPGQTPEGN. The Extracellular segment spans residues 1-66; sequence MGSKGAERRK…EEAVPDDRYH (66 aa). The chain crosses the membrane as a helical span at residues 67–87; sequence GIYFAMLLAGVGFLLPYNSFI. At 88–99 the chain is on the cytoplasmic side; it reads TDVDYLHHKFEG. A helical membrane pass occupies residues 100–120; sequence TSIVFDMGLTYILVALVAVIL. The Extracellular segment spans residues 121–133; it reads NNVLVEMLSLHTR. A helical membrane pass occupies residues 134–154; that stretch reads ITVGYLFALGPLLFVTIFDVW. The Cytoplasmic segment spans residues 155–157; that stretch reads LER. The chain crosses the membrane as a helical span at residues 158 to 178; that stretch reads FTIKQAYVINLMSMGTVAFGC. Topologically, residues 179–198 are extracellular; the sequence is TVQQSSFYGYMGMLPKRYTQ. A helical transmembrane segment spans residues 199-218; that stretch reads GVMTGESTAGVIISLSRIFT. Topologically, residues 219–229 are cytoplasmic; that stretch reads KLLIKDERKNT. A helical transmembrane segment spans residues 230–250; it reads IIFFVISICMVLVCFILHLLV. Topologically, residues 251–342 are extracellular; that stretch reads RRTRFVQYYT…MILHRYVVAR (92 aa). A helical membrane pass occupies residues 343-363; the sequence is VIWTYMLSIAVTYFITLCLFP. Residues 364-376 lie on the Cytoplasmic side of the membrane; the sequence is GLESEIKNATLGE. Residues 377–397 traverse the membrane as a helical segment; sequence WLPILIMAIFNISDFVGKILA. Topologically, residues 398 to 407 are extracellular; that stretch reads AVPYEWNGTR. The helical transmembrane segment at 408–428 threads the bilayer; sequence LLFFSCVRVVFIPLFIMCVYP. Topologically, residues 429-439 are cytoplasmic; that stretch reads AQMPMFSHPAW. Residues 440 to 460 form a helical membrane-spanning segment; sequence PCIFSLFMGITNGYFGSVPMI. At 461–476 the chain is on the extracellular side; that stretch reads HAAGKVAPEQRELAGN. Residues 477-497 traverse the membrane as a helical segment; that stretch reads IMTVSYMSGLMLGSVVAYAAY. The Cytoplasmic segment spans residues 498–518; sequence SFTASGSSFHSQTGYNFTQGY.

This sequence belongs to the SLC29A/ENT transporter (TC 2.A.57) family.

Its subcellular location is the membrane. Functionally, functions as a polyspecific organic cation transporter, efficiently transporting many organic cations such as monoamine neurotransmitters 1-methyl-4-phenylpyridinium and biogenic amines including serotonin, dopamine, norepinephrine and epinephrine. May play a role in regulating central nervous system homeostasis of monoamine neurotransmitters. May be involved in luminal transport of organic cations in the kidney and seems to use luminal proton gradient to drive organic cation reabsorption. Does not seem to transport nucleoside and nucleoside analogs such as uridine, cytidine, thymidine, adenosine, inosine, guanosine, and azidothymidine. In Danio rerio (Zebrafish), this protein is Equilibrative nucleoside transporter 4 (slc29a4).